Here is an 83-residue protein sequence, read N- to C-terminus: Cytochrome b559 subunit alpha (83 aa).

Residues 21-35 (VIHSITIPSLFIAGW) form a helical membrane-spanning segment. His23 contributes to the heme binding site.

Belongs to the PsbE/PsbF family. Heterodimer of an alpha subunit and a beta subunit. PSII is composed of 1 copy each of membrane proteins PsbA, PsbB, PsbC, PsbD, PsbE, PsbF, PsbH, PsbI, PsbJ, PsbK, PsbL, PsbM, PsbT, PsbX, PsbY, PsbZ, Psb30/Ycf12, at least 3 peripheral proteins of the oxygen-evolving complex and a large number of cofactors. It forms dimeric complexes. The cofactor is heme b.

It is found in the plastid. Its subcellular location is the chloroplast thylakoid membrane. In terms of biological role, this b-type cytochrome is tightly associated with the reaction center of photosystem II (PSII). PSII is a light-driven water:plastoquinone oxidoreductase that uses light energy to abstract electrons from H(2)O, generating O(2) and a proton gradient subsequently used for ATP formation. It consists of a core antenna complex that captures photons, and an electron transfer chain that converts photonic excitation into a charge separation. The protein is Cytochrome b559 subunit alpha of Ginkgo biloba (Ginkgo).